Reading from the N-terminus, the 408-residue chain is Arginine biosynthesis bifunctional protein ArgJ (408 aa).

Substrate-binding residues include T158, K184, T195, E281, N403, and T408. T195 (nucleophile) is an active-site residue.

It belongs to the ArgJ family. As to quaternary structure, heterotetramer of two alpha and two beta chains.

It is found in the cytoplasm. It catalyses the reaction N(2)-acetyl-L-ornithine + L-glutamate = N-acetyl-L-glutamate + L-ornithine. The catalysed reaction is L-glutamate + acetyl-CoA = N-acetyl-L-glutamate + CoA + H(+). Its pathway is amino-acid biosynthesis; L-arginine biosynthesis; L-ornithine and N-acetyl-L-glutamate from L-glutamate and N(2)-acetyl-L-ornithine (cyclic): step 1/1. It functions in the pathway amino-acid biosynthesis; L-arginine biosynthesis; N(2)-acetyl-L-ornithine from L-glutamate: step 1/4. Its function is as follows. Catalyzes two activities which are involved in the cyclic version of arginine biosynthesis: the synthesis of N-acetylglutamate from glutamate and acetyl-CoA as the acetyl donor, and of ornithine by transacetylation between N(2)-acetylornithine and glutamate. The polypeptide is Arginine biosynthesis bifunctional protein ArgJ (Shouchella clausii (strain KSM-K16) (Alkalihalobacillus clausii)).